The chain runs to 103 residues: Ig kappa-b5 chain C region (103 aa).

The Ig-like domain maps to 5 to 99 (PTVLIFPPAP…GAGSVVQSFS (95 aa)). Cysteine 26 and cysteine 85 are oxidised to a cystine.

This chain is Ig kappa-b5 chain C region, found in Oryctolagus cuniculus (Rabbit).